Reading from the N-terminus, the 92-residue chain is Auxin-responsive protein SAUR28 (92 aa).

It belongs to the ARG7 family. Higher expression in thermo-responsive cultivars (e.g. cv. Alst-1, cv. Ang-0 and cv. Com-0) than in low thermo-responsive cultivars (e.g. cv. Dja-1, cv. El-0 and cv. Kon).

It is found in the cell membrane. In terms of biological role, functions as a positive effector of cell expansion through modulation of auxin transport. Involved in thermo-responsiveness of plant architecture. Enhances plasma membrane H(+)-ATPase. The protein is Auxin-responsive protein SAUR28 of Arabidopsis thaliana (Mouse-ear cress).